The sequence spans 642 residues: Aryl hydrocarbon receptor nuclear translocator homolog (642 aa).

Residues 13-66 (ASRENHCEIERRRRNKMTAYITELSDMVPTCSALARKPDKLTILRMAVAHMKAL) enclose the bHLH domain. 2 consecutive PAS domains span residues 85 to 156 (DQEL…ESQN) and 271 to 341 (TAAN…LKQK). One can recognise a PAC domain in the interval 346 to 389 (SLLYRARAKNSEYVWLRTQAYAFLNPYTDEVEYIVCTNSSGKTM). The segment at 450–612 (QAPTPQQQQQ…GPAGAGQPQG (163 aa)) is disordered. Polar residues-rich tracts occupy residues 463 to 482 (RPGSAQTTPVGYTYDTTHSP) and 528 to 554 (YQYQQTSPARSPSGPTYTQLSAGNGNR). Residues 555 to 564 (QQAQPGAYQA) are compositionally biased toward low complexity.

In terms of assembly, efficient DNA binding requires dimerization with another bHLH protein. Heterodimer with ahr, trh or sim. In terms of tissue distribution, at stage 11, expression is detected in tracheal pits. At later stages, strong expression is also detected in the CNS.

The protein localises to the nucleus. Its function is as follows. Heterodimers of tgo/trh are involved in the control of breathless expression. Plays a role in the cellular or tissue response to oxygen deprivation. In Drosophila melanogaster (Fruit fly), this protein is Aryl hydrocarbon receptor nuclear translocator homolog (tgo).